The sequence spans 321 residues: Probable UDP-sugar transporter protein SLC35A4 (321 aa).

The Cytoplasmic portion of the chain corresponds to 1 to 22 (MYSVNIEPDGSNHSPSRKRLKQ). Residues 23-43 (ILWGLMLVLSVTIYGSHAPLI) form a helical membrane-spanning segment. Residues 44–56 (YLCKVNGEIPFSS) lie on the Lumenal side of the membrane. A helical transmembrane segment spans residues 57–77 (SAVVLLIELSKFVISLVFFLI). At 78 to 91 (QDWKSLKASVSWHL) the chain is on the cytoplasmic side. The chain crosses the membrane as a helical span at residues 92 to 112 (AAPYAVPAVLYGANNNLVVYI). Residues 113–119 (QHFMDPS) are Lumenal-facing. A helical transmembrane segment spans residues 120–140 (SFQVLSNLKIVSTAVLYSLFL). Residues 141-149 (RQRLSVRRW) lie on the Cytoplasmic side of the membrane. Residues 150–170 (LSVFLLLAAGVFYSYGGIQDL) form a helical membrane-spanning segment. Residues 171–180 (EKVSSDTNLY) lie on the Lumenal side of the membrane. The helical transmembrane segment at 181–201 (VTLPGLLLMLAYCLISGLSAV) threads the bilayer. The Cytoplasmic segment spans residues 202-211 (YTEMTLKTQK). Residues 212-232 (IPLNMQNLYLYSFGIIINLTA) form a helical membrane-spanning segment. Topologically, residues 233-247 (HLTSSKNSDFFDGFS) are lumenal. The helical transmembrane segment at 248-268 (VWVWVIILSQALNGLIMSLVM) threads the bilayer. Topologically, residues 269–321 (KLSNNITRLFIISFSMLANGFLSFILFQLQLTALFFLAVVLIGLAVYMYYGMK) are cytoplasmic.

Belongs to the nucleotide-sugar transporter family. SLC35A subfamily.

It is found in the golgi apparatus membrane. It carries out the reaction CDP-L-ribitol(in) + CDP(out) = CDP-L-ribitol(out) + CDP(in). Mediates the transport of CDP-ribitol. Does not exhibit CMP-sialic acid, UDP-galactose and UDP-N-acetylglucosamine transport activity. This chain is Probable UDP-sugar transporter protein SLC35A4, found in Xenopus tropicalis (Western clawed frog).